The chain runs to 128 residues: Large ribosomal subunit protein bL17 (128 aa).

Belongs to the bacterial ribosomal protein bL17 family. Part of the 50S ribosomal subunit. Contacts protein L32.

The protein is Large ribosomal subunit protein bL17 of Ehrlichia ruminantium (strain Gardel).